Reading from the N-terminus, the 544-residue chain is Glutamyl-tRNA(Gln) amidotransferase subunit B, chloroplastic/mitochondrial (544 aa).

It belongs to the GatB/GatE family. GatB subfamily. Subunit of the heterotrimeric GatCAB amidotransferase (AdT) complex, composed of A, B and C subunits.

Its subcellular location is the mitochondrion. The protein localises to the plastid. It localises to the chloroplast. The catalysed reaction is L-glutamyl-tRNA(Gln) + L-glutamine + ATP + H2O = L-glutaminyl-tRNA(Gln) + L-glutamate + ADP + phosphate + H(+). Functionally, allows the formation of correctly charged Gln-tRNA(Gln) through the transamidation of misacylated Glu-tRNA(Gln) in chloroplasts and mitochondria. The reaction takes place in the presence of glutamine and ATP through an activated gamma-phospho-Glu-tRNA(Gln). This Oryza sativa subsp. japonica (Rice) protein is Glutamyl-tRNA(Gln) amidotransferase subunit B, chloroplastic/mitochondrial.